Reading from the N-terminus, the 570-residue chain is Glucan 1,3-beta-glucosidase 2 (570 aa).

6 N-linked (GlcNAc...) asparagine glycosylation sites follow: asparagine 91, asparagine 116, asparagine 121, asparagine 184, asparagine 203, and asparagine 248. Glutamate 338 serves as the catalytic Proton donor. Asparagine 364 is a glycosylation site (N-linked (GlcNAc...) asparagine). Catalysis depends on glutamate 439, which acts as the Nucleophile. Asparagine 525 and asparagine 552 each carry an N-linked (GlcNAc...) asparagine glycan.

The protein belongs to the glycosyl hydrolase 5 (cellulase A) family.

The protein localises to the secreted. The catalysed reaction is Successive hydrolysis of beta-D-glucose units from the non-reducing ends of (1-&gt;3)-beta-D-glucans, releasing alpha-glucose.. In Schizosaccharomyces pombe (strain 972 / ATCC 24843) (Fission yeast), this protein is Glucan 1,3-beta-glucosidase 2 (exg2).